The following is a 264-amino-acid chain: Versicolorin reductase stcU (264 aa).

The NADP(+) site is built by Ile23, Asp69, Asn96, and Arg129. Residues Ser145 and Ser146 each act as proton donor in the active site. NADP(+) contacts are provided by Tyr160, Lys164, Ile193, and Thr195. Tyr160 (proton acceptor) is an active-site residue. The Lowers pKa of active site Tyr role is filled by Lys164.

The protein belongs to the short-chain dehydrogenases/reductases (SDR) family.

The catalysed reaction is (4S,8R)-2,13,16,20-tetrahydroxy-7,9-dioxapentacyclo[10.8.0.0(3,10).0(4,8).0(14,19)]icosa-1(12),2,5,10,13,16,19-heptaen-18-one + NADPH + H(+) = (4S,8R,16R)-2,13,16,20-tetrahydroxy-7,9-dioxapentacyclo[10.8.0.0(3,10).0(4,8).0(14,19)]icosa-1(12),2,5,10,13,19-hexaen-18-one + NADP(+). It participates in mycotoxin biosynthesis; sterigmatocystin biosynthesis. Versicolorin reductase; part of the gene cluster that mediates the biosynthesis of sterigmatocystin (ST), a polyketide-derived furanocoumarin which is part of the most toxic and carcinogenic compounds among the known mycotoxins. The first step in the biosynthesis of sterigmatocystin is the production of hexanoate by the fatty acid synthase (FAS) units stcJ and stcK. The polyketide backbone is assembled by the non-reducing polyketide synthase stcA by condensation of the starter hexanoyl-CoA and 7 malonyl-CoA extender units followed by cyclization and release of norsolorinic acid. Norsolorinic acid is the first stable intermediate in the biosynthesis of sterigmatocystin and is converted into averantin (AVN) by the ketoreductase stcE which reduces the hexanoate ketone to an alcohol. Averantin is then oxidized into 5'-hydroxyaverantin (HAVN) by the cytochrome P450 monooxygenase stcF. 5'-hydroxyaverantin is further converted to 5'-oxyaverantin (OAVN) by the 5'-hydroxyaverantin dehydrogenase stcG. The next step is the conversion of OAVN into averufin (AVF) which is catalyzed by a yet to be identified enzyme. The cytochrome P450 monooxygenase stcB and the flavin-binding monooxygenase stcW are both required for the conversion of averufin to 1-hydroxyversicolorone. The esterase stcI probably catalyzes the formation of versiconal hemiacetal acetate from 1-hydroxyversicolorone. The oxydoreductase stcN then probably catalyzes the biosynthetic step from versiconal to versicolorin B (VERB). The next step is performed by the versicolorin B desaturase stcL to produce versicolorin A (VERA). The ketoreductase stcU and the cytochrome P450 monooxygenase stcS are involved in the conversion of versicolorin A to demethylsterigmatocystin. The Baeyer-Villiger oxidas stcQ and the reductase stcR might be involved in the biosynthetic step from versicolorin A to demethylsterigmatocystin. The final step in the biosynthesis of sterigmatocystin is the methylation of demethylsterigmatocystin catalyzed by the methyltransferase stcP. This chain is Versicolorin reductase stcU, found in Emericella nidulans (strain FGSC A4 / ATCC 38163 / CBS 112.46 / NRRL 194 / M139) (Aspergillus nidulans).